A 554-amino-acid polypeptide reads, in one-letter code: Urocanate hydratase (554 aa).

Residues 51 to 52, glutamine 129, 175 to 177, glutamate 195, 241 to 242, 262 to 266, 272 to 273, and tyrosine 321 each bind NAD(+); these read GG, GMG, NA, QTSAH, and YL. Residue cysteine 409 is part of the active site. Glycine 491 is a binding site for NAD(+).

Belongs to the urocanase family. NAD(+) is required as a cofactor.

It localises to the cytoplasm. It carries out the reaction 4-imidazolone-5-propanoate = trans-urocanate + H2O. The protein operates within amino-acid degradation; L-histidine degradation into L-glutamate; N-formimidoyl-L-glutamate from L-histidine: step 2/3. Functionally, catalyzes the conversion of urocanate to 4-imidazolone-5-propionate. The sequence is that of Urocanate hydratase from Caulobacter vibrioides (strain ATCC 19089 / CIP 103742 / CB 15) (Caulobacter crescentus).